The following is a 548-amino-acid chain: ADP,ATP carrier protein 1 (548 aa).

Helical transmembrane passes span 39 to 59 and 75 to 95; these read RPVF…YSVS and SIPY…VFSI. N-linked (GlcNAc...) asparagine glycosylation occurs at asparagine 101. Transmembrane regions (helical) follow at residues 107-127, 149-169, 171-191, 204-224, 239-259, 302-322, 350-370, and 374-394; these read VFSI…TVLM, MVFM…SWTS, LMYL…FFAL, FIPL…FSMK, LFFR…IYLI, LVLA…MVEA, IQLA…PALI, and GFLY…ASVF. 2 N-linked (GlcNAc...) asparagine glycosylation sites follow: asparagine 400 and asparagine 406. The chain crosses the membrane as a helical span at residues 410–430; it reads LGFVSIGENLWLEQLLGAIIV. Asparagine 488 is a glycosylation site (N-linked (GlcNAc...) asparagine). The chain crosses the membrane as a helical span at residues 494 to 514; that stretch reads KAAISSLTIVTVITACWGFAV.

Belongs to the ADP/ATP translocase tlc family.

The protein resides in the cell membrane. In terms of biological role, ATP transporter involved in the uptake of ATP from the host cell cytoplasm. Provides the microsporidian cell with host ATP in exchange for ADP. This is an obligate exchange system. This energy acquiring activity is an important component of microsporidian parasitism. The protein is ADP,ATP carrier protein 1 (ANC1) of Paranosema grylli (Microsporidian parasite).